The following is a 282-amino-acid chain: Orotidine 5'-phosphate decarboxylase (282 aa).

Catalysis depends on K95, which acts as the Proton donor.

Belongs to the OMP decarboxylase family. Type 2 subfamily.

It carries out the reaction orotidine 5'-phosphate + H(+) = UMP + CO2. It participates in pyrimidine metabolism; UMP biosynthesis via de novo pathway; UMP from orotate: step 2/2. The protein is Orotidine 5'-phosphate decarboxylase (pyrF) of Mycobacterium leprae (strain TN).